Consider the following 257-residue polypeptide: Asnovolin H dehydrogenase nvfC (257 aa).

A helical membrane pass occupies residues 7-26 (YVLIITGSASGIGLATATIA). I11 lines the NADP(+) pocket. N-linked (GlcNAc...) asparagine glycosylation is found at N57, N92, and N110. Positions 119, 151, 155, and 184 each coordinate NADP(+). Y151 serves as the catalytic Proton donor. K155 (lowers pKa of active site Tyr) is an active-site residue.

This sequence belongs to the short-chain dehydrogenases/reductases (SDR) family.

It is found in the membrane. It catalyses the reaction asnovolin H + A = chermesin D + AH2. It participates in secondary metabolite biosynthesis; terpenoid biosynthesis. Its function is as follows. Short chain dehydrogenase; part of the gene cluster that mediates the biosynthesis of novofumigatonin, a heavily oxygenated meroterpenoid containing a unique orthoester moiety. The first step of the pathway is the synthesis of 3,5-dimethylorsellinic acid (DMOA) by the polyketide synthase nvfA via condensation of one acetyl-CoA starter unit with 3 malonyl-CoA units and 2 methylations. DMOA is then converted to farnesyl-DMOA by the farnesyltransferase nvfB. Epoxydation by FAD-dependent monooxygenase nvfK, followed by a protonation-initiated cyclization catalyzed by the terpene cyclase nvfL leads to the production of asnavolin H. The short chain dehydrogenase nvfC then as a 3-OH dehydrogenase of asnovolin H to yield chemesin D. There are two branches to synthesize asnovolin A from chemesin D. In one branch, chemesin D undergoes Baeyer-Villiger oxidation by nvfH, methylation by nvfJ, and enoyl reduction by the nvfM D enoylreductase that reduces the double bond between C-5'and C-6', to form respectively asnovolin I, asnovolin K, and asnovolin A. In the other branch, the methylation precedes the Baeyer-Villiger oxidation and the enoyl reduction to yield asnovolin A via the asnovolin J intermediate. Asnovolin A is further converted to fumigatonoid A by the Fe(II)/2-oxoglutarate-dependent dioxygenase nvfI that catalyzes an endoperoxidation reaction. The alpha/beta hydrolase nvfD then acts as an epimerase that converts fumigatonoid A to its C-5' epimer, which then undergoes spontaneous or nvfD-catalyzed lactonization. The following step utilizes the ketoreductase nvfG to produce fumigatonoid B. The dioxygenase nvfE further converts fumigatonoid B into fumigatonoid C. Finally the Fe(II)/2-oxoglutarate-dependent dioxygenase nvfF catalyzes two rounds of oxidation to transform fumigatonoid C into the end product, novofumigatonin A. The polypeptide is Asnovolin H dehydrogenase nvfC (Aspergillus novofumigatus (strain IBT 16806)).